The sequence spans 146 residues: ATP synthase epsilon chain (146 aa).

The interval 102–122 is disordered; sequence QSAKKRAEQHMQEAKEKHNER.

The protein belongs to the ATPase epsilon chain family. As to quaternary structure, F-type ATPases have 2 components, CF(1) - the catalytic core - and CF(0) - the membrane proton channel. CF(1) has five subunits: alpha(3), beta(3), gamma(1), delta(1), epsilon(1). CF(0) has three main subunits: a, b and c.

Its subcellular location is the cell membrane. Produces ATP from ADP in the presence of a proton gradient across the membrane. This is ATP synthase epsilon chain from Lactobacillus gasseri (strain ATCC 33323 / DSM 20243 / BCRC 14619 / CIP 102991 / JCM 1131 / KCTC 3163 / NCIMB 11718 / NCTC 13722 / AM63).